Here is a 224-residue protein sequence, read N- to C-terminus: Metalloproteinase inhibitor 4 (224 aa).

The signal sequence occupies residues 1-29 (MPWSPLAALSWALVLRLLALLWPPGRGEA). A Zn(2+)-binding site is contributed by Cys30. 2 involved in metalloproteinase-binding regions span residues 30–33 (CSCA) and 99–100 (SS). 6 cysteine pairs are disulfide-bonded: Cys30–Cys102, Cys32–Cys131, Cys42–Cys156, Cys158–Cys205, Cys163–Cys168, and Cys176–Cys197. An NTR domain is found at 30-156 (CSCAPAHPQQ…SLNHHYHQNC (127 aa)).

The protein belongs to the protease inhibitor I35 (TIMP) family. In terms of tissue distribution, expressed in brain, heart, ovary and skeletal muscle.

Its subcellular location is the secreted. Its function is as follows. Complexes with metalloproteinases (such as collagenases) and irreversibly inactivates them by binding to their catalytic zinc cofactor. The protein is Metalloproteinase inhibitor 4 (Timp4) of Mus musculus (Mouse).